A 137-amino-acid polypeptide reads, in one-letter code: MGSRALLLLKATTAETLLFTSKSTFSKALIRNSTRSFSTRSALLPPDLPRLAETARISLTPHEVEEFAPKIRQVIDWFGQLQAVDLQSIEPSIRADTEGDNLRDDSPETFENREAIIAAIPSYEEPYLKVPKVLNKD.

This sequence belongs to the GatC family. As to quaternary structure, subunit of the heterotrimeric GatCAB amidotransferase (AdT) complex, composed of A, B and C subunits.

It localises to the mitochondrion. Its subcellular location is the plastid. The protein resides in the chloroplast. It carries out the reaction L-glutamyl-tRNA(Gln) + L-glutamine + ATP + H2O = L-glutaminyl-tRNA(Gln) + L-glutamate + ADP + phosphate + H(+). Its function is as follows. Allows the formation of correctly charged Gln-tRNA(Gln) through the transamidation of misacylated Glu-tRNA(Gln) in chloroplasts and mitochondria. The reaction takes place in the presence of glutamine and ATP through an activated gamma-phospho-Glu-tRNA(Gln). The sequence is that of Glutamyl-tRNA(Gln) amidotransferase subunit C, chloroplastic/mitochondrial from Vitis vinifera (Grape).